Reading from the N-terminus, the 540-residue chain is Alanine aminotransferase 2, mitochondrial (540 aa).

The transit peptide at Met-1–Phe-46 directs the protein to the mitochondrion. The segment at Gly-11–Pro-40 is disordered. The span at Leu-28 to Pro-40 shows a compositional bias: low complexity. At Lys-357 the chain carries N6-(pyridoxal phosphate)lysine.

It belongs to the class-I pyridoxal-phosphate-dependent aminotransferase family. Alanine aminotransferase subfamily. As to quaternary structure, homodimer. The cofactor is pyridoxal 5'-phosphate. In terms of processing, the N-terminus is blocked. Expressed in shoots, essentially in leaves and flowers, mostly in vascular tissues. Also detected in stems and roots.

It is found in the mitochondrion. The catalysed reaction is L-alanine + 2-oxoglutarate = pyruvate + L-glutamate. It functions in the pathway photosynthesis; C4 acid pathway. Its pathway is amino-acid degradation; L-alanine degradation via transaminase pathway; pyruvate from L-alanine: step 1/1. The chain is Alanine aminotransferase 2, mitochondrial (ALAAT2) from Arabidopsis thaliana (Mouse-ear cress).